A 314-amino-acid polypeptide reads, in one-letter code: tRNA dimethylallyltransferase (314 aa).

13 to 20 (GPTAVGKT) is a binding site for ATP. 15–20 (TAVGKT) serves as a coordination point for substrate. An interaction with substrate tRNA region spans residues 38-41 (DSMQ).

Belongs to the IPP transferase family. As to quaternary structure, monomer. It depends on Mg(2+) as a cofactor.

The enzyme catalyses adenosine(37) in tRNA + dimethylallyl diphosphate = N(6)-dimethylallyladenosine(37) in tRNA + diphosphate. Its function is as follows. Catalyzes the transfer of a dimethylallyl group onto the adenine at position 37 in tRNAs that read codons beginning with uridine, leading to the formation of N6-(dimethylallyl)adenosine (i(6)A). The protein is tRNA dimethylallyltransferase of Bacillus velezensis (strain DSM 23117 / BGSC 10A6 / LMG 26770 / FZB42) (Bacillus amyloliquefaciens subsp. plantarum).